Reading from the N-terminus, the 353-residue chain is 41 kDa protein (353 aa).

Positions 132-197 (QSSHASALEQ…DNNSSDTIKD (66 aa)) are disordered. Over residues 157-169 (LDNKGKSDSENCN) the composition is skewed to basic and acidic residues.

The chain is 41 kDa protein from Lactobacillus helveticus (Lactobacillus suntoryeus).